The primary structure comprises 236 residues: UPF0257 lipoprotein YnfC (236 aa).

An N-terminal signal peptide occupies residues Met-1–Gly-16. The N-palmitoyl cysteine moiety is linked to residue Cys-17. The S-diacylglycerol cysteine moiety is linked to residue Cys-17.

Belongs to the UPF0257 family.

The protein resides in the cell membrane. This chain is UPF0257 lipoprotein YnfC, found in Salmonella schwarzengrund (strain CVM19633).